The chain runs to 24 residues: Small ribosomal subunit protein uS19c (24 aa).

The protein belongs to the universal ribosomal protein uS19 family.

Its subcellular location is the plastid. The protein resides in the chloroplast. Its function is as follows. Protein S19 forms a complex with S13 that binds strongly to the 16S ribosomal RNA. In Petunia hybrida (Petunia), this protein is Small ribosomal subunit protein uS19c (rps19).